The following is a 320-amino-acid chain: Cytochrome c1-1, heme protein, mitochondrial (320 aa).

The transit peptide at 1–77 (MSLGKKIRIG…LLSFATIAYS (77 aa)) directs the protein to the mitochondrion. Residues 78 to 280 (DEAEHGLECP…WAAEPEMEER (203 aa)) are Mitochondrial intermembrane-facing. Residues 103–210 (ASIRRGHQVY…NGQNYVFALL (108 aa)) enclose the Cytochrome c domain. Heme c contacts are provided by C116, C119, H120, and M239. A helical membrane pass occupies residues 281–301 (KLMGFKWIFVLSLALLQAAYY). Residues 302-320 (RRLRWSVLKSRKLVLDVVN) are Mitochondrial matrix-facing.

Belongs to the cytochrome c family. Component of the ubiquinol-cytochrome c oxidoreductase (cytochrome b-c1 complex, complex III, CIII), a multisubunit enzyme composed of 3 respiratory subunits cytochrome b, cytochrome c1 and Rieske protein, 2 core protein subunits, and additional low-molecular weight protein subunits. The complex exists as an obligatory dimer and forms supercomplexes (SCs) in the inner mitochondrial membrane with cytochrome c oxidase (complex IV, CIV). The cofactor is heme c. In all tissues analyzed.

It is found in the mitochondrion inner membrane. The enzyme catalyses a quinol + 2 Fe(III)-[cytochrome c](out) = a quinone + 2 Fe(II)-[cytochrome c](out) + 2 H(+)(out). Functionally, component of the ubiquinol-cytochrome c oxidoreductase, a multisubunit transmembrane complex that is part of the mitochondrial electron transport chain which drives oxidative phosphorylation. The respiratory chain contains 3 multisubunit complexes succinate dehydrogenase (complex II, CII), ubiquinol-cytochrome c oxidoreductase (cytochrome b-c1 complex, complex III, CIII) and cytochrome c oxidase (complex IV, CIV), that cooperate to transfer electrons derived from NADH and succinate to molecular oxygen, creating an electrochemical gradient over the inner membrane that drives transmembrane transport and the ATP synthase. The cytochrome b-c1 complex catalyzes electron transfer from ubiquinol to cytochrome c, linking this redox reaction to translocation of protons across the mitochondrial inner membrane, with protons being carried across the membrane as hydrogens on the quinol. In the process called Q cycle, 2 protons are consumed from the matrix, 4 protons are released into the intermembrane space and 2 electrons are passed to cytochrome c. Cytochrome c1 is a catalytic core subunit containing a c-type heme. It transfers electrons from the [2Fe-2S] iron-sulfur cluster of the Rieske protein to cytochrome c. This is Cytochrome c1-1, heme protein, mitochondrial (CYCL) from Solanum tuberosum (Potato).